Reading from the N-terminus, the 58-residue chain is Large ribosomal subunit protein uL30 (58 aa).

The protein belongs to the universal ribosomal protein uL30 family. In terms of assembly, part of the 50S ribosomal subunit.

The sequence is that of Large ribosomal subunit protein uL30 from Pseudomonas putida (strain ATCC 700007 / DSM 6899 / JCM 31910 / BCRC 17059 / LMG 24140 / F1).